The sequence spans 349 residues: MSDRKAALDMALRQIEKQFGKGSIMKLGEQAEQRVSTISSGALALDIALGVGGYPRGRVIEVYGPESSGKTTVALHAIAEVQRNGGQAAFIDAEHALDPVYAKKLGVNIDELLLSQPDTGEQALEIAEALVRSGAIDVIVIDSVAALVPKAEIEGEMGDSHVGLQARLMSQALRKLSGAINKSKTIAIFINQIREKVGVMFGNPETTPGGRALKFYSSVRLEVRRAETLKQGNDMVGNKTKIKVVKNKVAPPFKQAEVDIMYGEGISREGSILDIASELDIVQKSGAWYSFNDERLGQGRENAKQFLKENPEAAEEIESRIREHYGLNGEIEVEAPSEEEFEDLPLDLK.

ATP is bound at residue 64-71; sequence GPESSGKT. The interval 328 to 349 is disordered; that stretch reads NGEIEVEAPSEEEFEDLPLDLK. Residues 331–349 are compositionally biased toward acidic residues; sequence IEVEAPSEEEFEDLPLDLK.

The protein belongs to the RecA family.

The protein localises to the cytoplasm. Functionally, can catalyze the hydrolysis of ATP in the presence of single-stranded DNA, the ATP-dependent uptake of single-stranded DNA by duplex DNA, and the ATP-dependent hybridization of homologous single-stranded DNAs. It interacts with LexA causing its activation and leading to its autocatalytic cleavage. The polypeptide is Protein RecA (Halalkalibacterium halodurans (strain ATCC BAA-125 / DSM 18197 / FERM 7344 / JCM 9153 / C-125) (Bacillus halodurans)).